We begin with the raw amino-acid sequence, 365 residues long: N5-carboxyaminoimidazole ribonucleotide synthase (365 aa).

Residues Arg-102, Lys-143, 148 to 154 (GYDGKGQ), 177 to 180 (EEYV), Glu-185, and 256 to 257 (NE) contribute to the ATP site. The ATP-grasp domain maps to 106 to 286 (KLFYRQHNLP…QFEQHLRAII (181 aa)).

Belongs to the PurK/PurT family. Homodimer.

The catalysed reaction is 5-amino-1-(5-phospho-beta-D-ribosyl)imidazole + hydrogencarbonate + ATP = 5-carboxyamino-1-(5-phospho-D-ribosyl)imidazole + ADP + phosphate + 2 H(+). It participates in purine metabolism; IMP biosynthesis via de novo pathway; 5-amino-1-(5-phospho-D-ribosyl)imidazole-4-carboxylate from 5-amino-1-(5-phospho-D-ribosyl)imidazole (N5-CAIR route): step 1/2. Functionally, catalyzes the ATP-dependent conversion of 5-aminoimidazole ribonucleotide (AIR) and HCO(3)(-) to N5-carboxyaminoimidazole ribonucleotide (N5-CAIR). The sequence is that of N5-carboxyaminoimidazole ribonucleotide synthase from Saccharolobus solfataricus (strain ATCC 35092 / DSM 1617 / JCM 11322 / P2) (Sulfolobus solfataricus).